The following is a 354-amino-acid chain: Transcription factor BHLH3 (354 aa).

The disordered stretch occupies residues 124–143 (VAEEETSGDKALLHGGGGSS). Positions 178–191 (GTPSKNLMAERRRR) are basic motif. The bHLH domain occupies 178–227 (GTPSKNLMAERRRRKRLNDRLSMLRSIVPKISKMDRTSILGDTIDYVKEL). The helix-loop-helix motif stretch occupies residues 192-227 (KRLNDRLSMLRSIVPKISKMDRTSILGDTIDYVKEL).

This sequence belongs to the bHLH protein family. In terms of assembly, interacts with LAX1. Phosphorylated by MAPK3 and MAPK6.

It is found in the nucleus. The protein localises to the cytoplasm. In terms of biological role, transcription factor involved in defense responses that functions downstream of RAC1 and upstream of PAL1 and WRKY19 genes. This chain is Transcription factor BHLH3, found in Oryza sativa subsp. japonica (Rice).